Consider the following 268-residue polypeptide: Tetraspanin-5 (268 aa).

Residues 1 to 17 are Cytoplasmic-facing; it reads MSGKHYKGPEVSCCIKY. A helical transmembrane segment spans residues 18–38; sequence FIFGFNVIFWFLGITFLGIGL. The Extracellular portion of the chain corresponds to 39–61; it reads WAWNEKGVLSNISSITDLGGFDP. The N-linked (GlcNAc...) asparagine glycan is linked to N49. Residues 62-82 traverse the membrane as a helical segment; that stretch reads VWLFLVVGGVMFILGFAGCIG. The Cytoplasmic portion of the chain corresponds to 83 to 92; sequence ALRENTFLLK. The helical transmembrane segment at 93-113 threads the bilayer; the sequence is FFSVFLGIIFFLELTAGVLAF. Topologically, residues 114–232 are extracellular; that stretch reads VFKDWIKDQL…PQFEKWLQDN (119 aa). Disulfide bonds link C153–C221, C154–C186, C170–C180, and C187–C200. 2 N-linked (GlcNAc...) asparagine glycosylation sites follow: N169 and N174. N232 is a glycosylation site (N-linked (GlcNAc...) asparagine). The helical transmembrane segment at 233 to 253 threads the bilayer; sequence LTIVAGIFIGIALLQIFGICL. Residues 254-268 are Cytoplasmic-facing; it reads AQNLVSDIEAVRASW.

The protein belongs to the tetraspanin (TM4SF) family. As to quaternary structure, interacts with ADAM10; the interaction influences ADAM10 substrate specificity, endocytosis and turnover. Post-translationally, palmitoylated.

Its subcellular location is the cell membrane. Part of TspanC8 subgroup, composed of 6 members that interact with the transmembrane metalloprotease ADAM10. This interaction is required for ADAM10 exit from the endoplasmic reticulum and for enzymatic maturation and trafficking to the cell surface as well as substrate specificity. Different TspanC8/ADAM10 complexes have distinct substrates. Promotes ADAM10-mediated cleavage of CD44. Seems to regulate VE-cadherin expression in endothelial cells probably through interaction with ADAM10, promoting leukocyte transmigration. This chain is Tetraspanin-5, found in Homo sapiens (Human).